Reading from the N-terminus, the 113-residue chain is Endoribonuclease SymE (113 aa).

The SpoVT-AbrB domain occupies 29–74; it reads SRYPDYSRIPAITLKGQWLEAAGFATGTAIDVKVMEGCIVLTAQPP.

The protein belongs to the SymE family.

The protein localises to the cytoplasm. In terms of biological role, involved in the degradation and recycling of damaged RNA. It is itself a target for degradation by the ATP-dependent protease Lon. In Escherichia coli O1:K1 / APEC, this protein is Endoribonuclease SymE.